The following is a 312-amino-acid chain: Expansin-A24 (312 aa).

An N-terminal signal peptide occupies residues 1 to 27; sequence MELLKRKLYAKILMMVMVIWIAPMTNG. A disordered region spans residues 31–86; the sequence is ASHVPGGRPGAHPSHGAHPAHGAHPSHGAHPSHGAHPSHGAHPSHGALPSHGGQVP. Residues 40-77 show a composition bias toward low complexity; it reads GAHPSHGAHPAHGAHPSHGAHPSHGAHPSHGAHPSHGA. Repeat copies occupy residues 42-47, 48-53, 54-59, 60-65, 66-71, and 72-77. Residues 42-77 form a 6 X 6 AA tandem repeats of H-P-S-H-G-A region; it reads HPSHGAHPAHGAHPSHGAHPSHGAHPSHGAHPSHGA. Residues 108–218 form the Expansin-like EG45 domain; the sequence is QGACGYGDLH…RRVPCAKIGG (111 aa). Positions 228 to 307 constitute an Expansin-like CBD domain; it reads HFLMILPYNV…DWKCNGQSFD (80 aa).

It belongs to the expansin family. Expansin A subfamily.

It localises to the secreted. Its subcellular location is the cell wall. It is found in the membrane. In terms of biological role, causes loosening and extension of plant cell walls by disrupting non-covalent bonding between cellulose microfibrils and matrix glucans. No enzymatic activity has been found. The sequence is that of Expansin-A24 (EXPA24) from Arabidopsis thaliana (Mouse-ear cress).